A 246-amino-acid chain; its full sequence is Probable cytokinin riboside 5'-monophosphate phosphoribohydrolase LOGL5 (246 aa).

Over residues 1–10 the composition is skewed to basic and acidic residues; that stretch reads MMMENSREQQ. A disordered region spans residues 1–28; it reads MMMENSREQQPESSPANNNSKKKKKKKT. Substrate is bound by residues Glu-103, 121–122, 138–144, and Thr-150; these read RK and GYGTLEE.

Belongs to the LOG family. In terms of tissue distribution, expressed in roots and leaves.

The enzyme catalyses N(6)-(dimethylallyl)adenosine 5'-phosphate + H2O = N(6)-dimethylallyladenine + D-ribose 5-phosphate. It carries out the reaction 9-ribosyl-trans-zeatin 5'-phosphate + H2O = trans-zeatin + D-ribose 5-phosphate. Its function is as follows. Cytokinin-activating enzyme working in the direct activation pathway. Phosphoribohydrolase that converts inactive cytokinin nucleotides to the biologically active free-base forms. This chain is Probable cytokinin riboside 5'-monophosphate phosphoribohydrolase LOGL5 (LOGL5), found in Oryza sativa subsp. japonica (Rice).